Consider the following 216-residue polypeptide: Probable inactive E3 ubiquitin-protein ligase SINAT6 (216 aa).

The segment at 5-74 adopts an SIAH-type zinc-finger fold; sequence INDLQVESRV…LLLHLRNDHN (70 aa).

Belongs to the SINA (Seven in absentia) family. In terms of assembly, homodimer. Interacts with SINAT1, SINAT2, SINAT3, SINAT4 and SINAT5. Interacts with ATG6 and TRAF1A. In terms of tissue distribution, expressed in roots, rosette leaves, cauline leaves, guard cells and flowers.

It localises to the cytoplasm. It is found in the nucleus. Probable inactive E3 ubiquitin-protein ligase that plays a role in regulation of autophagy. Upon starvation, involved in maintaining ATG6 homeostasis by competitively associating with ATG6, a component of the autophagosome complex. Acts as a positive regulator of drought stress response. Functions as a positive regulator of abscisic acid-mediated stomatal closure. This Arabidopsis thaliana (Mouse-ear cress) protein is Probable inactive E3 ubiquitin-protein ligase SINAT6.